The sequence spans 250 residues: Cobalt transport protein CbiM (250 aa).

An N-terminal signal peptide occupies residues 1 to 26 (MNKKEKRIVAIAAAFALCFGISPAVN). 6 helical membrane-spanning segments follow: residues 38 to 58 (KYCITWGILSIPFLVAGYFSI), 68 to 88 (SITMLAMAGAFVFVLSSLKIP), 102 to 122 (LGAILFGPSAVSILGIIVLIF), 134 to 154 (TLGANTFSMAIAGPFVSFGIY), 165 to 185 (LSGIFLAAFVGDLFTYCVTSI), and 209 to 229 (FAPTQVPLAIIEGILTVVIMI).

This sequence belongs to the CbiM family. In terms of assembly, forms an energy-coupling factor (ECF) transporter complex composed of an ATP-binding protein (A component, CbiO), a transmembrane protein (T component, CbiQ) and 2 possible substrate-capture proteins (S components, CbiM and CbiN) of unknown stoichimetry.

It is found in the cell membrane. Its pathway is cofactor biosynthesis; adenosylcobalamin biosynthesis. Part of the energy-coupling factor (ECF) transporter complex CbiMNOQ involved in cobalt import. The polypeptide is Cobalt transport protein CbiM (Lachnoclostridium phytofermentans (strain ATCC 700394 / DSM 18823 / ISDg) (Clostridium phytofermentans)).